The chain runs to 177 residues: uncharacterized protein (177 aa).

It to B.subtilis YutG.

This is an uncharacterized protein from Bacillus subtilis (strain 168).